A 274-amino-acid polypeptide reads, in one-letter code: ATP synthase subunit a (274 aa).

Helical transmembrane passes span 43–63 (TLNI…LYVF), 103–123 (VIAP…VMDL), 144–164 (VVPT…FVLI), 223–243 (LIFI…LSLP), and 245–265 (AIFH…LTIV).

The protein belongs to the ATPase A chain family. As to quaternary structure, F-type ATPases have 2 components, CF(1) - the catalytic core - and CF(0) - the membrane proton channel. CF(1) has five subunits: alpha(3), beta(3), gamma(1), delta(1), epsilon(1). CF(0) has three main subunits: a(1), b(2) and c(9-12). The alpha and beta chains form an alternating ring which encloses part of the gamma chain. CF(1) is attached to CF(0) by a central stalk formed by the gamma and epsilon chains, while a peripheral stalk is formed by the delta and b chains.

Its subcellular location is the cell inner membrane. In terms of biological role, key component of the proton channel; it plays a direct role in the translocation of protons across the membrane. This is ATP synthase subunit a from Photorhabdus laumondii subsp. laumondii (strain DSM 15139 / CIP 105565 / TT01) (Photorhabdus luminescens subsp. laumondii).